Here is a 176-residue protein sequence, read N- to C-terminus: Adenine phosphoribosyltransferase (176 aa).

This sequence belongs to the purine/pyrimidine phosphoribosyltransferase family. In terms of assembly, homodimer.

The protein localises to the cytoplasm. It carries out the reaction AMP + diphosphate = 5-phospho-alpha-D-ribose 1-diphosphate + adenine. It functions in the pathway purine metabolism; AMP biosynthesis via salvage pathway; AMP from adenine: step 1/1. Catalyzes a salvage reaction resulting in the formation of AMP, that is energically less costly than de novo synthesis. The protein is Adenine phosphoribosyltransferase of Borreliella burgdorferi (strain ATCC 35210 / DSM 4680 / CIP 102532 / B31) (Borrelia burgdorferi).